A 456-amino-acid polypeptide reads, in one-letter code: Gamma-aminobutyric acid receptor subunit alpha-1 (456 aa).

Residues 1–27 (MKKSPGLSDYLWAWTLFLSTLTGRSYG) form the signal peptide. The Extracellular segment spans residues 28–253 (QPSLQDELKD…FHLKRKIGYF (226 aa)). Asparagine 38 carries N-linked (GlcNAc...) asparagine glycosylation. Residue arginine 94 participates in 4-aminobutanoate binding. An N-linked (GlcNAc...) asparagine glycan is attached at asparagine 138. Threonine 157 is a binding site for 4-aminobutanoate. An intrachain disulfide couples cysteine 166 to cysteine 180. The chain crosses the membrane as a helical span at residues 254 to 274 (VIQTYLPCIMTVILSQVSFWL). The Cytoplasmic segment spans residues 275 to 279 (NRESV). The helical transmembrane segment at 280–301 (PARTVFGVTTVLTMTTLSISAR) threads the bilayer. Over 302-311 (NSLPKVAYAT) the chain is Extracellular. A helical transmembrane segment spans residues 312 to 333 (AMDWFIAVCYAFVFSALIEFAT). Topologically, residues 334-421 (VNYFTKRGYA…TFNSVSKIDR (88 aa)) are cytoplasmic. A helical membrane pass occupies residues 422–441 (LSRIAFPLLFGIFNLVYWAT). The Extracellular segment spans residues 442-456 (YLNREPQLKAPTPHQ).

The protein belongs to the ligand-gated ion channel (TC 1.A.9) family. Gamma-aminobutyric acid receptor (TC 1.A.9.5) subfamily. GABRA1 sub-subfamily. Heteropentamer, formed by a combination of alpha (GABRA1-6), beta (GABRB1-3), gamma (GABRG1-3), delta (GABRD), epsilon (GABRE), rho (GABRR1-3), pi (GABRP) and theta (GABRQ) subunits, each subunit exhibiting distinct physiological and pharmacological properties. Interacts with UBQLN1. Interacts with TRAK1. Interacts with KIF21B. Identified in a complex of 720 kDa composed of LHFPL4, NLGN2, GABRA1, GABRB2, GABRG2 and GABRB3. Interacts with LHFPL4. Interacts with NLGN2. Interacts with SHISA7; interaction leads to the regulation of GABA(A) receptor trafficking, channel deactivation kinetics and pharmacology. In terms of tissue distribution, cerebellar granule cells, Purkinje cells and stellate/basket cells.

The protein resides in the postsynaptic cell membrane. The protein localises to the cell membrane. It localises to the cytoplasmic vesicle membrane. The enzyme catalyses chloride(in) = chloride(out). With respect to regulation, allosterically activated by benzodiazepines, the neuroanesthetic alphaxalone and pentobarbital. Inhibited by the antagonist bicuculline. Potentiated by histamine. Alpha subunit of the heteropentameric ligand-gated chloride channel gated by gamma-aminobutyric acid (GABA), a major inhibitory neurotransmitter in the brain. GABA-gated chloride channels, also named GABA(A) receptors (GABAAR), consist of five subunits arranged around a central pore and contain GABA active binding site(s) located at the alpha and beta subunit interface(s). When activated by GABA, GABAARs selectively allow the flow of chloride anions across the cell membrane down their electrochemical gradient. Alpha-1/GABRA1-containing GABAARs are largely synaptic. Chloride influx into the postsynaptic neuron following GABAAR opening decreases the neuron ability to generate a new action potential, thereby reducing nerve transmission. GABAARs containing alpha-1 and beta-2 or -3 subunits exhibit synaptogenic activity; the gamma-2 subunit being necessary but not sufficient to induce rapid synaptic contacts formation. GABAARs function also as histamine receptor where histamine binds at the interface of two neighboring beta subunits and potentiates GABA response. GABAARs containing alpha, beta and epsilon subunits also permit spontaneous chloride channel activity while preserving the structural information required for GABA-gated openings. Alpha-1-mediated plasticity in the orbitofrontal cortex regulates context-dependent action selection. Together with rho subunits, may also control neuronal and glial GABAergic transmission in the cerebellum. This chain is Gamma-aminobutyric acid receptor subunit alpha-1 (GABRA1), found in Bos taurus (Bovine).